Consider the following 53-residue polypeptide: Large ribosomal subunit protein bL32c (53 aa).

This sequence belongs to the bacterial ribosomal protein bL32 family.

The protein localises to the plastid. The protein resides in the chloroplast. In Guillardia theta (Cryptophyte), this protein is Large ribosomal subunit protein bL32c (rpl32).